The chain runs to 301 residues: Ribosomal protein L11 methyltransferase (301 aa).

S-adenosyl-L-methionine contacts are provided by threonine 146, glycine 167, aspartate 189, and asparagine 234.

This sequence belongs to the methyltransferase superfamily. PrmA family.

Its subcellular location is the cytoplasm. The enzyme catalyses L-lysyl-[protein] + 3 S-adenosyl-L-methionine = N(6),N(6),N(6)-trimethyl-L-lysyl-[protein] + 3 S-adenosyl-L-homocysteine + 3 H(+). In terms of biological role, methylates ribosomal protein L11. This is Ribosomal protein L11 methyltransferase from Acinetobacter baumannii (strain AB307-0294).